The sequence spans 1641 residues: Alpha-2-macroglobulin (1641 aa).

Residues 1–31 (MRDRVAMMLRPLVRGWIPRAVLLLTVAFSFG) form the signal peptide. The N-palmitoyl cysteine moiety is linked to residue Cys32. Cys32 carries S-diacylglycerol cysteine lipidation. A cross-link (isoglutamyl cysteine thioester (Cys-Gln)) is located at residues 1166-1169 (CAEQ).

It belongs to the protease inhibitor I39 (alpha-2-macroglobulin) family. Bacterial alpha-2-macroglobulin subfamily.

The protein resides in the cell membrane. Functionally, protects the bacterial cell from host peptidases. In Xylella fastidiosa (strain Temecula1 / ATCC 700964), this protein is Alpha-2-macroglobulin.